The following is a 145-amino-acid chain: Baseplate protein gp46 (145 aa).

Part of a complex composed of three DNA circularization protein N, three baseplate hub protein gp44 and three sub-complex wedge (made of two copies of each baseplate protein gp46, gp47 and gp48) that forms the baseplate.

The protein localises to the virion. Its subcellular location is the host cytoplasm. Its function is as follows. Component of the baseplate. Probable connector between the central and peripheral parts of the baseplate. Probably involved in tail assembly. The sequence is that of Baseplate protein gp46 from Enterobacteriaceae (Bacteriophage Mu).